The primary structure comprises 304 residues: Acetylglutamate kinase (304 aa).

Substrate contacts are provided by residues 71–72 (GG), Arg-93, and Asn-193.

The protein belongs to the acetylglutamate kinase family. ArgB subfamily.

It is found in the cytoplasm. It catalyses the reaction N-acetyl-L-glutamate + ATP = N-acetyl-L-glutamyl 5-phosphate + ADP. It functions in the pathway amino-acid biosynthesis; L-arginine biosynthesis; N(2)-acetyl-L-ornithine from L-glutamate: step 2/4. Its function is as follows. Catalyzes the ATP-dependent phosphorylation of N-acetyl-L-glutamate. In Streptomyces avermitilis (strain ATCC 31267 / DSM 46492 / JCM 5070 / NBRC 14893 / NCIMB 12804 / NRRL 8165 / MA-4680), this protein is Acetylglutamate kinase.